Consider the following 215-residue polypeptide: Variable small protein 2 (215 aa).

Positions 1–18 (MRKRISAIIMTLFMVFMS) are cleaved as a signal peptide. A lipid anchor (N-palmitoyl cysteine) is attached at Cys-19. Cys-19 is lipidated: S-diacylglycerol cysteine.

The protein belongs to the variable small protein (Vsp) family.

Its subcellular location is the cell outer membrane. Its function is as follows. The Vlp and Vsp proteins are antigenically distinct proteins, only one vlp or vsp gene is transcriptionally active at any one time. Switching between these genes is a mechanism of host immune response evasion. This Borrelia hermsii protein is Variable small protein 2.